We begin with the raw amino-acid sequence, 261 residues long: Syntaxin-7 (261 aa).

At Ser2 the chain carries N-acetylserine. Over 2–238 the chain is Cytoplasmic; sequence SYTPGIGGDP…NYQRKSRKTL (237 aa). Thr4 is subject to Phosphothreonine. A coiled-coil region spans residues 47 to 68; the sequence is ELRQQLQQEQQYTNQLAKETDK. At Thr79 the chain carries Phosphothreonine. Ser125, Ser126, Ser129, and Ser205 each carry phosphoserine. The segment at 128–148 is disordered; sequence VSGGFPEDSSKEKNFVSWESQ. Residues 165–227 enclose the t-SNARE coiled-coil homology domain; sequence LRLIHERESS…QQANQQLSRA (63 aa). The helical; Anchor for type IV membrane protein transmembrane segment at 239-259 threads the bilayer; sequence CIIILILVVGIVIIFFIVWGL. Residues 260 to 261 lie on the Vesicular side of the membrane; it reads KG.

The protein belongs to the syntaxin family. In terms of assembly, interacts with VPS11, VPS16 and VPS18. Interacts with VPS33A. Forms a SNARE complex with VTI1B, STX8 and VAMP8 which functions in the homotypic fusion of late endosomes. Component of the SNARE complex composed of STX7, STX8, VAMP7 and VTI1B that is required for heterotypic fusion of late endosomes with lysosomes. Interacts with TPC1. In terms of tissue distribution, detected in all tissues tested. Highest expression is found in kidney followed by lung, spleen, heart and brain. Lower expression, in skeletal muscle, liver and testis.

Its subcellular location is the early endosome membrane. May be involved in protein trafficking from the plasma membrane to the early endosome (EE) as well as in homotypic fusion of endocytic organelles. Mediates the endocytic trafficking from early endosomes to late endosomes and lysosomes. This Rattus norvegicus (Rat) protein is Syntaxin-7 (Stx7).